We begin with the raw amino-acid sequence, 98 residues long: NADH-ubiquinone oxidoreductase chain 4L (98 aa).

Transmembrane regions (helical) follow at residues 1–21 (MSPM…GLAF), 26–46 (LLSA…ATAT), and 58–78 (ILPM…LAIL).

It belongs to the complex I subunit 4L family.

Its subcellular location is the mitochondrion membrane. It catalyses the reaction a ubiquinone + NADH + 5 H(+)(in) = a ubiquinol + NAD(+) + 4 H(+)(out). In terms of biological role, core subunit of the mitochondrial membrane respiratory chain NADH dehydrogenase (Complex I) which catalyzes electron transfer from NADH through the respiratory chain, using ubiquinone as an electron acceptor. Part of the enzyme membrane arm which is embedded in the lipid bilayer and involved in proton translocation. The polypeptide is NADH-ubiquinone oxidoreductase chain 4L (MT-ND4L) (Scyliorhinus canicula (Small-spotted catshark)).